The chain runs to 169 residues: Cell division inhibitor SulA (169 aa).

The interval 106-112 (ALRTGNY) is ftsZ binding. Residues 162–169 (KIHSNLYH) are lon protease binding.

Belongs to the SulA family. As to quaternary structure, interacts with FtsZ. Post-translationally, is rapidly cleaved and degraded by the Lon protease once DNA damage is repaired.

Component of the SOS system and an inhibitor of cell division. Accumulation of SulA causes rapid cessation of cell division and the appearance of long, non-septate filaments. In the presence of GTP, binds a polymerization-competent form of FtsZ in a 1:1 ratio, thus inhibiting FtsZ polymerization and therefore preventing it from participating in the assembly of the Z ring. This mechanism prevents the premature segregation of damaged DNA to daughter cells during cell division. The polypeptide is Cell division inhibitor SulA (Citrobacter koseri (strain ATCC BAA-895 / CDC 4225-83 / SGSC4696)).